The sequence spans 502 residues: Probable cytosol aminopeptidase (502 aa).

Residues Lys-265 and Asp-270 each contribute to the Mn(2+) site. Lys-277 is a catalytic residue. Mn(2+) is bound by residues Asp-288, Asp-347, and Glu-349. Residue Arg-351 is part of the active site.

The protein belongs to the peptidase M17 family. Requires Mn(2+) as cofactor.

The protein resides in the cytoplasm. The catalysed reaction is Release of an N-terminal amino acid, Xaa-|-Yaa-, in which Xaa is preferably Leu, but may be other amino acids including Pro although not Arg or Lys, and Yaa may be Pro. Amino acid amides and methyl esters are also readily hydrolyzed, but rates on arylamides are exceedingly low.. It catalyses the reaction Release of an N-terminal amino acid, preferentially leucine, but not glutamic or aspartic acids.. Its function is as follows. Presumably involved in the processing and regular turnover of intracellular proteins. Catalyzes the removal of unsubstituted N-terminal amino acids from various peptides. The protein is Probable cytosol aminopeptidase of Rickettsia bellii (strain RML369-C).